Reading from the N-terminus, the 409-residue chain is UPF0261 protein Spro_4740 (409 aa).

The protein belongs to the UPF0261 family.

This chain is UPF0261 protein Spro_4740, found in Serratia proteamaculans (strain 568).